Consider the following 276-residue polypeptide: MPDYAIGDIQGCYDPLQRLLELIDFNEKDDCLWFVGDLVNRGPDSLAVLRFIYSLPVKPKITLGNHDLHLLGLLFGGQPWKGHDDTLEEVMLADDGEELGHWLRKQSLLCRSSELNIVMCHAGIAPLWDLSKAVGLANELEAVLSGDSYHEFFAQMYGNKPDIWSDDLVGLDRLRVITNYFTRMRYCDAHGRLDLGYKGTLSKAPNHLYPWFEVPCRKEIEMDIVFGHWAALMGRSSHPRIHAIDTGCLWGGQLTALRLQDRQRFSVPGYGVSRFE.

The protein belongs to the Ap4A hydrolase family.

It carries out the reaction P(1),P(4)-bis(5'-adenosyl) tetraphosphate + H2O = 2 ADP + 2 H(+). Its function is as follows. Hydrolyzes diadenosine 5',5'''-P1,P4-tetraphosphate to yield ADP. This is Bis(5'-nucleosyl)-tetraphosphatase, symmetrical from Legionella pneumophila (strain Lens).